Reading from the N-terminus, the 190-residue chain is 6,7-dimethyl-8-ribityllumazine synthase (190 aa).

Residues F23, 61–63 (SFE), and 85–87 (AVI) contribute to the 5-amino-6-(D-ribitylamino)uracil site. 90–91 (QT) serves as a coordination point for (2S)-2-hydroxy-3-oxobutyl phosphate. The active-site Proton donor is the H93. Position 118 (F118) interacts with 5-amino-6-(D-ribitylamino)uracil. R132 contacts (2S)-2-hydroxy-3-oxobutyl phosphate.

This sequence belongs to the DMRL synthase family.

The enzyme catalyses (2S)-2-hydroxy-3-oxobutyl phosphate + 5-amino-6-(D-ribitylamino)uracil = 6,7-dimethyl-8-(1-D-ribityl)lumazine + phosphate + 2 H2O + H(+). It functions in the pathway cofactor biosynthesis; riboflavin biosynthesis; riboflavin from 2-hydroxy-3-oxobutyl phosphate and 5-amino-6-(D-ribitylamino)uracil: step 1/2. Catalyzes the formation of 6,7-dimethyl-8-ribityllumazine by condensation of 5-amino-6-(D-ribitylamino)uracil with 3,4-dihydroxy-2-butanone 4-phosphate. This is the penultimate step in the biosynthesis of riboflavin. In Nostoc sp. (strain PCC 7120 / SAG 25.82 / UTEX 2576), this protein is 6,7-dimethyl-8-ribityllumazine synthase.